The following is a 371-amino-acid chain: 4-hydroxy-3-methylbut-2-en-1-yl diphosphate synthase (flavodoxin) (371 aa).

[4Fe-4S] cluster-binding residues include C270, C273, C305, and E312.

This sequence belongs to the IspG family. It depends on [4Fe-4S] cluster as a cofactor.

It catalyses the reaction (2E)-4-hydroxy-3-methylbut-2-enyl diphosphate + oxidized [flavodoxin] + H2O + 2 H(+) = 2-C-methyl-D-erythritol 2,4-cyclic diphosphate + reduced [flavodoxin]. It participates in isoprenoid biosynthesis; isopentenyl diphosphate biosynthesis via DXP pathway; isopentenyl diphosphate from 1-deoxy-D-xylulose 5-phosphate: step 5/6. In terms of biological role, converts 2C-methyl-D-erythritol 2,4-cyclodiphosphate (ME-2,4cPP) into 1-hydroxy-2-methyl-2-(E)-butenyl 4-diphosphate. The protein is 4-hydroxy-3-methylbut-2-en-1-yl diphosphate synthase (flavodoxin) of Chromohalobacter salexigens (strain ATCC BAA-138 / DSM 3043 / CIP 106854 / NCIMB 13768 / 1H11).